Consider the following 335-residue polypeptide: Histidinol-phosphatase (335 aa).

It belongs to the PHP hydrolase family. HisK subfamily.

The catalysed reaction is L-histidinol phosphate + H2O = L-histidinol + phosphate. Its pathway is amino-acid biosynthesis; L-histidine biosynthesis; L-histidine from 5-phospho-alpha-D-ribose 1-diphosphate: step 8/9. This is Histidinol-phosphatase (HIS2) from Saccharomyces cerevisiae (strain ATCC 204508 / S288c) (Baker's yeast).